A 921-amino-acid polypeptide reads, in one-letter code: Isoleucine--tRNA ligase (921 aa).

A 'HIGH' region motif is present at residues 57–67 (PYANGDIHMGH). Glutamate 553 is an L-isoleucyl-5'-AMP binding site. The short motif at 594 to 598 (KMSKS) is the 'KMSKS' region element. An ATP-binding site is contributed by lysine 597.

This sequence belongs to the class-I aminoacyl-tRNA synthetase family. IleS type 1 subfamily. As to quaternary structure, monomer.

It localises to the cytoplasm. The enzyme catalyses tRNA(Ile) + L-isoleucine + ATP = L-isoleucyl-tRNA(Ile) + AMP + diphosphate. Functionally, catalyzes the attachment of isoleucine to tRNA(Ile). As IleRS can inadvertently accommodate and process structurally similar amino acids such as valine, to avoid such errors it has two additional distinct tRNA(Ile)-dependent editing activities. One activity is designated as 'pretransfer' editing and involves the hydrolysis of activated Val-AMP. The other activity is designated 'posttransfer' editing and involves deacylation of mischarged Val-tRNA(Ile). The sequence is that of Isoleucine--tRNA ligase from Bacillus subtilis (strain 168).